The following is a 154-amino-acid chain: Transcriptional repressor NrdR (154 aa).

A zinc finger lies at 3–34; that stretch reads CPYCQSEDTQVKDSRPAEDGAAIRRRRACPVC. One can recognise an ATP-cone domain in the interval 49–139; that stretch reads LVVVKRTGRK…VYRNFREAKD (91 aa).

This sequence belongs to the NrdR family. Requires Zn(2+) as cofactor.

In terms of biological role, negatively regulates transcription of bacterial ribonucleotide reductase nrd genes and operons by binding to NrdR-boxes. The protein is Transcriptional repressor NrdR of Chelativorans sp. (strain BNC1).